The following is a 63-amino-acid chain: uncharacterized protein (63 aa).

Residues 4 to 24 (LNQFILIFLLLIVILFIFFLI) traverse the membrane as a helical segment.

It localises to the membrane. This is an uncharacterized protein from Invertebrate iridescent virus 6 (IIV-6).